We begin with the raw amino-acid sequence, 400 residues long: Argininosuccinate synthase (400 aa).

ATP is bound at residue 10-18; sequence AFSGGLDTT. Tyr87 is a binding site for L-citrulline. Gly117 is a binding site for ATP. L-aspartate-binding residues include Thr119, Asn123, and Asp124. Asn123 contacts L-citrulline. L-citrulline contacts are provided by Arg127, Ser173, Ser182, Glu255, and Tyr267.

The protein belongs to the argininosuccinate synthase family. Type 1 subfamily. In terms of assembly, homotetramer.

It localises to the cytoplasm. It catalyses the reaction L-citrulline + L-aspartate + ATP = 2-(N(omega)-L-arginino)succinate + AMP + diphosphate + H(+). It functions in the pathway amino-acid biosynthesis; L-arginine biosynthesis; L-arginine from L-ornithine and carbamoyl phosphate: step 2/3. The sequence is that of Argininosuccinate synthase from Natronomonas pharaonis (strain ATCC 35678 / DSM 2160 / CIP 103997 / JCM 8858 / NBRC 14720 / NCIMB 2260 / Gabara) (Halobacterium pharaonis).